The sequence spans 283 residues: Putative sugar uptake protein BC_0219 (283 aa).

A run of 10 helical transmembrane segments spans residues 4–21 (LLALLPAIAWGNILLVSV), 26–48 (GAYSQTVGMTIGALFFATIMYVF), 52–71 (ALTMTILIVGFISGLFWALG), 84–106 (VSTTVTISTGMQLVATSIFGVIA), 110–132 (WTTTTTIILGTIAILLIVVGVVF), 151–173 (LLTLIVSTFGYLVYVIIIRWYNI), 178–195 (AILPQAVGMFVGAVVLTS), 208–230 (ALSGLLWGTGNLFLLLSLPRVGV), 234–253 (FPLSQTGIVISTFGAIVFLG), and 260–279 (QLIFIALGSVLIIGGAVLLG).

Belongs to the GRP transporter (TC 2.A.7.5) family.

The protein localises to the cell membrane. This Bacillus cereus (strain ATCC 14579 / DSM 31 / CCUG 7414 / JCM 2152 / NBRC 15305 / NCIMB 9373 / NCTC 2599 / NRRL B-3711) protein is Putative sugar uptake protein BC_0219.